We begin with the raw amino-acid sequence, 84 residues long: Putative membrane protein insertion efficiency factor (84 aa).

A disordered region spans residues 63 to 84; that stretch reads WGGSGYDPVPGADPEHDRRPRG. Positions 75–84 are enriched in basic and acidic residues; the sequence is DPEHDRRPRG.

This sequence belongs to the UPF0161 family.

The protein resides in the cell inner membrane. Functionally, could be involved in insertion of integral membrane proteins into the membrane. The sequence is that of Putative membrane protein insertion efficiency factor from Cereibacter sphaeroides (strain ATCC 17029 / ATH 2.4.9) (Rhodobacter sphaeroides).